The following is a 394-amino-acid chain: Guanine nucleotide-binding protein G(s) subunit alpha isoforms short (394 aa).

The tract at residues 1–23 (MGCLGNSKTEDQRNEEKAQREAN) is disordered. Glycine 2 carries the N-palmitoyl glycine lipid modification. Cysteine 3 carries S-palmitoyl cysteine lipidation. A compositionally biased stretch (basic and acidic residues) spans 8–23 (KTEDQRNEEKAQREAN). In terms of domain architecture, G-alpha spans 39-394 (ATHRLLLLGA…RMHLRQYELL (356 aa)). Positions 42–55 (RLLLLGAGESGKST) are G1 motif. 47–55 (GAGESGKST) provides a ligand contact to GTP. A Mg(2+)-binding site is contributed by serine 54. Positions 68–90 (FNGEGGEEDPQAARSNSDGEKAT) are disordered. The segment at 196-204 (DLLRCRVLT) is G2 motif. GTP contacts are provided by residues 197–204 (LLRCRVLT), 223–227 (DVGGQ), and 292–295 (NKQD). Threonine 204 provides a ligand contact to Mg(2+). Residues 219–228 (FHMFDVGGQR) are G3 motif. The tract at residues 288–295 (ILFLNKQD) is G4 motif. Lysine 300 participates in a covalent cross-link: Glycyl lysine isopeptide (Lys-Gly) (interchain with G-Cter in ubiquitin). The residue at position 352 (serine 352) is a Phosphoserine. The G5 motif stretch occupies residues 364–369 (TCAVDT). Alanine 366 is a binding site for GTP.

It belongs to the G-alpha family. G(s) subfamily. Heterotrimeric G proteins are composed of 3 units; alpha, beta and gamma. The alpha chain contains the guanine nucleotide binding site. Component of the TAS2R14-GNAS2 complex, consisting of TAS2R14, GNAS2, GNB1 and GNG2; within the complex interacts with TAS2R14; this complex plays a role in the perception of bitterness. Interacts with CRY1; the interaction may block GPCR-mediated regulation of cAMP concentrations. Interacts with ADCY6 and stimulates its adenylyl cyclase activity. Interacts with ADCY2 and ADCY5. Interacts (GDP-bound form) with RIC8B; promoting GNAS folding and association with the plasma membrane. Stimulates the ADCY5 adenylyl cyclase activity. Interaction with SASH1. Interacts with GASL2L2.

The protein resides in the cell membrane. The catalysed reaction is GTP + H2O = GDP + phosphate + H(+). In terms of biological role, guanine nucleotide-binding proteins (G proteins) function as transducers in numerous signaling pathways controlled by G protein-coupled receptors (GPCRs). The alpha chain contains the guanine nucleotide binding site and alternates between an active, GTP-bound state and an inactive, GDP-bound state. Signaling by an activated GPCR promotes GDP release and GTP binding. The alpha subunit has a low GTPase activity that converts bound GTP to GDP, thereby terminating the signal. Both GDP release and GTP hydrolysis are modulated by numerous regulatory proteins. Signaling involves the activation of adenylyl cyclases, resulting in increased levels of the signaling molecule cAMP. Functions downstream of beta-adrenergic receptors. Stimulates the Ras signaling pathway via RAPGEF2. This is Guanine nucleotide-binding protein G(s) subunit alpha isoforms short (Gnas) from Mus musculus (Mouse).